The sequence spans 441 residues: Chromosome partition protein MukF (441 aa).

The leucine-zipper stretch occupies residues 208–236 (LTETSSTLRELQDTLEAAGDKLQTSLLSI).

It belongs to the MukF family. As to quaternary structure, interacts, and probably forms a ternary complex, with MukE and MukB via its C-terminal region. The complex formation is stimulated by calcium or magnesium. It is required for an interaction between MukE and MukB.

It is found in the cytoplasm. The protein resides in the nucleoid. Functionally, involved in chromosome condensation, segregation and cell cycle progression. May participate in facilitating chromosome segregation by condensation DNA from both sides of a centrally located replisome during cell division. Not required for mini-F plasmid partitioning. Probably acts via its interaction with MukB and MukE. Overexpression results in anucleate cells. It has a calcium binding activity. The sequence is that of Chromosome partition protein MukF from Pectobacterium atrosepticum (strain SCRI 1043 / ATCC BAA-672) (Erwinia carotovora subsp. atroseptica).